The sequence spans 238 residues: MDKVAAVVAAAGRGSRMGTETRKQYLSLAGLPVVGHVLRAMEASSAVKSVVTVVAPGEENYFRLTVVERLGIRKVAAIVPGGEERQDSVYNGLLALAPDTGIVVVHDGARPLLSPGDINAVVQAAAAYGAATLAVPVKDTVKMAGRDGFVLRTLSREHLWLVQTPQAFRYDIIMNAHRQARQKKYAATDDAGLVELLGRPVKIVAGSYENIKITTPEDLTVAEAVIKARQGRLAEAGG.

The protein belongs to the IspD/TarI cytidylyltransferase family. IspD subfamily.

The catalysed reaction is 2-C-methyl-D-erythritol 4-phosphate + CTP + H(+) = 4-CDP-2-C-methyl-D-erythritol + diphosphate. Its pathway is isoprenoid biosynthesis; isopentenyl diphosphate biosynthesis via DXP pathway; isopentenyl diphosphate from 1-deoxy-D-xylulose 5-phosphate: step 2/6. In terms of biological role, catalyzes the formation of 4-diphosphocytidyl-2-C-methyl-D-erythritol from CTP and 2-C-methyl-D-erythritol 4-phosphate (MEP). The sequence is that of 2-C-methyl-D-erythritol 4-phosphate cytidylyltransferase from Pelotomaculum thermopropionicum (strain DSM 13744 / JCM 10971 / SI).